The sequence spans 207 residues: MRPLTARQQEVLDLLKRHLETTGMPPTRAEISRELGFKSANAAEEHLKALSRKGAIEIIPGASRGIRILDNSSNDEFDGLPLVGRVRAGEPILAEQHIEATYRVDADMFKPQADFLLKVYGLSMKNVGILDGDLLAVHSTKDVRNGQIVVARIEDEVTVKRLEKKGSIIYLHAENEEFDPIVVNLEEQKNFEIEGIAVGIIRNNAWM.

The segment at residues 28 to 48 is a DNA-binding region (H-T-H motif); the sequence is RAEISRELGFKSANAAEEHLK. Active-site for autocatalytic cleavage activity residues include Ser-123 and Lys-160.

It belongs to the peptidase S24 family. Homodimer.

It catalyses the reaction Hydrolysis of Ala-|-Gly bond in repressor LexA.. Its function is as follows. Represses a number of genes involved in the response to DNA damage (SOS response), including recA and lexA. In the presence of single-stranded DNA, RecA interacts with LexA causing an autocatalytic cleavage which disrupts the DNA-binding part of LexA, leading to derepression of the SOS regulon and eventually DNA repair. The protein is LexA repressor of Haemophilus influenzae (strain ATCC 51907 / DSM 11121 / KW20 / Rd).